A 184-amino-acid chain; its full sequence is Acireductone dioxygenase (184 aa).

Residues His87, His89, Glu93, and His137 each contribute to the Fe(2+) site. The Ni(2+) site is built by His87, His89, Glu93, and His137.

This sequence belongs to the acireductone dioxygenase (ARD) family. It depends on Fe(2+) as a cofactor. Requires Ni(2+) as cofactor.

The protein resides in the cytoplasm. Its subcellular location is the nucleus. The catalysed reaction is 1,2-dihydroxy-5-(methylsulfanyl)pent-1-en-3-one + O2 = 4-methylsulfanyl-2-oxobutanoate + formate + 2 H(+). It catalyses the reaction 1,2-dihydroxy-5-(methylsulfanyl)pent-1-en-3-one + O2 = 3-(methylsulfanyl)propanoate + CO + formate + 2 H(+). It participates in amino-acid biosynthesis; L-methionine biosynthesis via salvage pathway; L-methionine from S-methyl-5-thio-alpha-D-ribose 1-phosphate: step 5/6. In terms of biological role, catalyzes 2 different reactions between oxygen and the acireductone 1,2-dihydroxy-3-keto-5-methylthiopentene (DHK-MTPene) depending upon the metal bound in the active site. Fe-containing acireductone dioxygenase (Fe-ARD) produces formate and 2-keto-4-methylthiobutyrate (KMTB), the alpha-ketoacid precursor of methionine in the methionine recycle pathway. Ni-containing acireductone dioxygenase (Ni-ARD) produces methylthiopropionate, carbon monoxide and formate, and does not lie on the methionine recycle pathway. In Ciona intestinalis (Transparent sea squirt), this protein is Acireductone dioxygenase.